We begin with the raw amino-acid sequence, 572 residues long: Methionine--tRNA ligase (572 aa).

The 'HIGH' region motif lies at 11 to 21 (PYINGIKHLGN). 4 residues coordinate Zn(2+): Cys-143, Cys-146, Cys-156, and Cys-159. A 'KMSKS' region motif is present at residues 346-350 (QFSTS). Thr-349 provides a ligand contact to ATP.

The protein belongs to the class-I aminoacyl-tRNA synthetase family. MetG type 1 subfamily. In terms of assembly, monomer. The cofactor is Zn(2+).

Its subcellular location is the cytoplasm. The catalysed reaction is tRNA(Met) + L-methionine + ATP = L-methionyl-tRNA(Met) + AMP + diphosphate. Functionally, is required not only for elongation of protein synthesis but also for the initiation of all mRNA translation through initiator tRNA(fMet) aminoacylation. In Dinoroseobacter shibae (strain DSM 16493 / NCIMB 14021 / DFL 12), this protein is Methionine--tRNA ligase.